The chain runs to 465 residues: Cerebellar degeneration-related protein 2-like (465 aa).

3 coiled-coil regions span residues Ala-31 to Glu-64, Ala-91 to Leu-142, and Leu-188 to Ala-266. Positions Ala-282 to Lys-315 are disordered. Phosphoserine is present on residues Ser-308, Ser-318, and Ser-344. Residues Met-350–His-377 adopt a coiled-coil conformation. The segment at Arg-382–His-421 is disordered. A Phosphoserine modification is found at Ser-407.

It belongs to the CDR2 family.

The protein is Cerebellar degeneration-related protein 2-like (Cdr2l) of Mus musculus (Mouse).